We begin with the raw amino-acid sequence, 76 residues long: Kappa-actitoxin-Avd4g (76 aa).

A signal peptide spans 1 to 19; that stretch reads MNKALFLCLVVLCAAVVFA. The propeptide occupies 20 to 31; that stretch reads AEDLQKAKHAPF. 3 disulfide bridges follow: cysteine 37–cysteine 72, cysteine 39–cysteine 65, and cysteine 55–cysteine 73.

The protein belongs to the sea anemone type 3 (BDS) potassium channel toxin family. As to expression, moderately expressed in the ectodermal tissue from the distal and proximal tentacles, body wall, and oral disk.

Its subcellular location is the secreted. The protein localises to the nematocyst. Its function is as follows. Blocks Kv3 voltage-gated potassium channels. Reduces blood pressure. The chain is Kappa-actitoxin-Avd4g from Anemonia viridis (Snakelocks anemone).